The primary structure comprises 307 residues: Olfactory receptor 13G1 (307 aa).

The Extracellular portion of the chain corresponds to 1-22 (MNHSVVTEFIILGLTKKPELQG). A glycan (N-linked (GlcNAc...) asparagine) is linked at Asn-2. Residues 23-43 (IIFLFFLIVYLVAFLGNMLII) form a helical membrane-spanning segment. Residues 44–51 (IAKIYNNT) lie on the Cytoplasmic side of the membrane. The helical transmembrane segment at 52–72 (LHTPMYVFLLTLAVVDIICTT) threads the bilayer. Residues 73 to 96 (SIIPKMLGTMLTSENTISYAGCMS) lie on the Extracellular side of the membrane. A disulfide bridge connects residues Cys-94 and Cys-186. A helical transmembrane segment spans residues 97-117 (QLFLFTWSLGAEMVLFTTMAY). The Cytoplasmic segment spans residues 118-136 (DRYVAICFPLHYSTIMNHH). Residues 137–157 (MCVALLSMVMAIAVTNSWVHT) traverse the membrane as a helical segment. At 158–194 (ALIMRLTFCGPNTIDHFFCEIPPLLALSCSPVRINEV) the chain is on the extracellular side. Residues 195–214 (MVYVADITLAIGDFILTCIS) traverse the membrane as a helical segment. The Cytoplasmic segment spans residues 215–234 (YGFIIVAILRIRTVEGKRKA). A helical transmembrane segment spans residues 235 to 255 (FSTCSSHLTVVTLYYSPVIYT). Residues 256–268 (YIRPASSYTFERD) are Extracellular-facing. Residues 269-289 (KVVAALYTLVTPTLNPMVYSF) form a helical membrane-spanning segment. Topologically, residues 290–307 (QNREMQAGIRKVFAFLKH) are cytoplasmic.

The protein belongs to the G-protein coupled receptor 1 family.

The protein resides in the cell membrane. Functionally, odorant receptor. This is Olfactory receptor 13G1 (OR13G1) from Homo sapiens (Human).